The chain runs to 132 residues: HLA class I histocompatibility antigen protein P5 (132 aa).

In terms of tissue distribution, expressed in lymphoid tissues; Detected in spleen as well as in B-cell lines, NK cell lines and activated lymphocytes.

The chain is HLA class I histocompatibility antigen protein P5 (HCP5) from Homo sapiens (Human).